A 119-amino-acid polypeptide reads, in one-letter code: Ribonuclease P protein component (119 aa).

It belongs to the RnpA family. Consists of a catalytic RNA component (M1 or rnpB) and a protein subunit.

The enzyme catalyses Endonucleolytic cleavage of RNA, removing 5'-extranucleotides from tRNA precursor.. RNaseP catalyzes the removal of the 5'-leader sequence from pre-tRNA to produce the mature 5'-terminus. It can also cleave other RNA substrates such as 4.5S RNA. The protein component plays an auxiliary but essential role in vivo by binding to the 5'-leader sequence and broadening the substrate specificity of the ribozyme. The sequence is that of Ribonuclease P protein component from Streptococcus mutans serotype c (strain ATCC 700610 / UA159).